Consider the following 284-residue polypeptide: Acetyl-coenzyme A carboxylase carboxyl transferase subunit beta (284 aa).

One can recognise a CoA carboxyltransferase N-terminal domain in the interval 25 to 284 (LWVKCPETGA…LCKILTKSVQ (260 aa)).

The protein belongs to the AccD/PCCB family. Acetyl-CoA carboxylase is a heterohexamer composed of biotin carboxyl carrier protein (AccB), biotin carboxylase (AccC) and two subunits each of ACCase subunit alpha (AccA) and ACCase subunit beta (AccD).

Its subcellular location is the cytoplasm. It catalyses the reaction N(6)-carboxybiotinyl-L-lysyl-[protein] + acetyl-CoA = N(6)-biotinyl-L-lysyl-[protein] + malonyl-CoA. It participates in lipid metabolism; malonyl-CoA biosynthesis; malonyl-CoA from acetyl-CoA: step 1/1. Functionally, component of the acetyl coenzyme A carboxylase (ACC) complex. Biotin carboxylase (BC) catalyzes the carboxylation of biotin on its carrier protein (BCCP) and then the CO(2) group is transferred by the transcarboxylase to acetyl-CoA to form malonyl-CoA. The sequence is that of Acetyl-coenzyme A carboxylase carboxyl transferase subunit beta from Liberibacter asiaticus (strain psy62).